Consider the following 377-residue polypeptide: 4-hydroxy-3-methylbut-2-en-1-yl diphosphate synthase (flavodoxin) (377 aa).

The [4Fe-4S] cluster site is built by C275, C278, C310, and E317.

It belongs to the IspG family. Requires [4Fe-4S] cluster as cofactor.

The enzyme catalyses (2E)-4-hydroxy-3-methylbut-2-enyl diphosphate + oxidized [flavodoxin] + H2O + 2 H(+) = 2-C-methyl-D-erythritol 2,4-cyclic diphosphate + reduced [flavodoxin]. It participates in isoprenoid biosynthesis; isopentenyl diphosphate biosynthesis via DXP pathway; isopentenyl diphosphate from 1-deoxy-D-xylulose 5-phosphate: step 5/6. Functionally, converts 2C-methyl-D-erythritol 2,4-cyclodiphosphate (ME-2,4cPP) into 1-hydroxy-2-methyl-2-(E)-butenyl 4-diphosphate. This Jannaschia sp. (strain CCS1) protein is 4-hydroxy-3-methylbut-2-en-1-yl diphosphate synthase (flavodoxin).